A 352-amino-acid chain; its full sequence is Phosphoribosylformylglycinamidine cyclo-ligase (352 aa).

It belongs to the AIR synthase family.

It is found in the cytoplasm. It carries out the reaction 2-formamido-N(1)-(5-O-phospho-beta-D-ribosyl)acetamidine + ATP = 5-amino-1-(5-phospho-beta-D-ribosyl)imidazole + ADP + phosphate + H(+). The protein operates within purine metabolism; IMP biosynthesis via de novo pathway; 5-amino-1-(5-phospho-D-ribosyl)imidazole from N(2)-formyl-N(1)-(5-phospho-D-ribosyl)glycinamide: step 2/2. The protein is Phosphoribosylformylglycinamidine cyclo-ligase of Pseudomonas syringae pv. tomato (strain ATCC BAA-871 / DC3000).